A 204-amino-acid chain; its full sequence is Probable nicotinate-nucleotide adenylyltransferase (204 aa).

Belongs to the NadD family.

The enzyme catalyses nicotinate beta-D-ribonucleotide + ATP + H(+) = deamido-NAD(+) + diphosphate. It participates in cofactor biosynthesis; NAD(+) biosynthesis; deamido-NAD(+) from nicotinate D-ribonucleotide: step 1/1. Its function is as follows. Catalyzes the reversible adenylation of nicotinate mononucleotide (NaMN) to nicotinic acid adenine dinucleotide (NaAD). This Methylacidiphilum infernorum (isolate V4) (Methylokorus infernorum (strain V4)) protein is Probable nicotinate-nucleotide adenylyltransferase.